The following is a 549-amino-acid chain: Cytoplasmic trehalase (549 aa).

Residues Arg168, 175 to 176 (WD), Asn212, 221 to 223 (RSQ), 292 to 294 (RDE), and Gly324 contribute to the substrate site. Catalysis depends on proton donor/acceptor residues Asp326 and Glu509. Substrate is bound at residue Glu525.

It belongs to the glycosyl hydrolase 37 family. As to quaternary structure, monomer.

Its subcellular location is the cytoplasm. It carries out the reaction alpha,alpha-trehalose + H2O = alpha-D-glucose + beta-D-glucose. It functions in the pathway glycan degradation; trehalose degradation; D-glucose from alpha,alpha-trehalose: step 1/1. Functionally, hydrolyzes trehalose to glucose. Could be involved, in cells returning to low osmolarity conditions, in the utilization of the accumulated cytoplasmic trehalose, which was synthesized in response to high osmolarity. This Escherichia coli (strain 55989 / EAEC) protein is Cytoplasmic trehalase.